Consider the following 471-residue polypeptide: Glutamate--tRNA ligase (471 aa).

The 'HIGH' region motif lies at 9-19; it reads PSPTGYLHVGG. 4 residues coordinate Zn(2+): Cys-98, Cys-100, Cys-125, and His-127. The 'KMSKS' region signature appears at 237–241; sequence KLSKR. Residue Lys-240 coordinates ATP.

This sequence belongs to the class-I aminoacyl-tRNA synthetase family. Glutamate--tRNA ligase type 1 subfamily. As to quaternary structure, monomer. The cofactor is Zn(2+).

The protein localises to the cytoplasm. The catalysed reaction is tRNA(Glu) + L-glutamate + ATP = L-glutamyl-tRNA(Glu) + AMP + diphosphate. In terms of biological role, catalyzes the attachment of glutamate to tRNA(Glu) in a two-step reaction: glutamate is first activated by ATP to form Glu-AMP and then transferred to the acceptor end of tRNA(Glu). In Escherichia coli (strain ATCC 8739 / DSM 1576 / NBRC 3972 / NCIMB 8545 / WDCM 00012 / Crooks), this protein is Glutamate--tRNA ligase.